A 301-amino-acid polypeptide reads, in one-letter code: 4-hydroxy-tetrahydrodipicolinate synthase (301 aa).

Residue Thr57 coordinates pyruvate. Tyr145 serves as the catalytic Proton donor/acceptor. Residue Lys173 is the Schiff-base intermediate with substrate of the active site. Residue Ile213 coordinates pyruvate.

This sequence belongs to the DapA family. In terms of assembly, homotetramer; dimer of dimers.

It is found in the cytoplasm. The enzyme catalyses L-aspartate 4-semialdehyde + pyruvate = (2S,4S)-4-hydroxy-2,3,4,5-tetrahydrodipicolinate + H2O + H(+). The protein operates within amino-acid biosynthesis; L-lysine biosynthesis via DAP pathway; (S)-tetrahydrodipicolinate from L-aspartate: step 3/4. In terms of biological role, catalyzes the condensation of (S)-aspartate-beta-semialdehyde [(S)-ASA] and pyruvate to 4-hydroxy-tetrahydrodipicolinate (HTPA). The sequence is that of 4-hydroxy-tetrahydrodipicolinate synthase from Corynebacterium diphtheriae (strain ATCC 700971 / NCTC 13129 / Biotype gravis).